The following is a 149-amino-acid chain: Large ribosomal subunit protein bL9 (149 aa).

Belongs to the bacterial ribosomal protein bL9 family.

In terms of biological role, binds to the 23S rRNA. The polypeptide is Large ribosomal subunit protein bL9 (Edwardsiella ictaluri (strain 93-146)).